The sequence spans 432 residues: Adenosylhomocysteinase (432 aa).

Residues threonine 56, aspartate 131, and glutamate 156 each coordinate substrate. 157–159 (TTT) provides a ligand contact to NAD(+). Lysine 186 and aspartate 190 together coordinate substrate. Residues 222-227 (GDVGKG), glutamate 243, asparagine 248, 299-301 (IGH), asparagine 346, histidine 353, lysine 426, 426-430 (KPDHY), and tyrosine 430 contribute to the NAD(+) site.

It belongs to the adenosylhomocysteinase family. As to quaternary structure, interacts with AhcyL1; the interaction may negatively regulate Ahcy catalytic activity. NAD(+) serves as cofactor.

The enzyme catalyses S-adenosyl-L-homocysteine + H2O = L-homocysteine + adenosine. It participates in amino-acid biosynthesis; L-homocysteine biosynthesis; L-homocysteine from S-adenosyl-L-homocysteine: step 1/1. Its function is as follows. Adenosylhomocysteine is a competitive inhibitor of S-adenosyl-L-methionine-dependent methyl transferase reactions; therefore adenosylhomocysteinase may play a key role in the control of methylations via regulation of the intracellular concentration of adenosylhomocysteine. In Drosophila melanogaster (Fruit fly), this protein is Adenosylhomocysteinase.